Consider the following 60-residue polypeptide: Small ribosomal subunit protein uS10 (60 aa).

The protein belongs to the universal ribosomal protein uS10 family.

The sequence is that of Small ribosomal subunit protein uS10 (RPS20) from Zea mays (Maize).